A 612-amino-acid chain; its full sequence is Indole-3-acetic acid-amido synthetase GH3.5 (612 aa).

It belongs to the IAA-amido conjugating enzyme family.

Catalyzes the synthesis of indole-3-acetic acid (IAA)-amino acid conjugates, providing a mechanism for the plant to cope with the presence of excess auxin. Strongly reactive with Glu, Gln, Trp, Asp, Ala, Leu, Phe, Gly, Tyr, Met, Ile and Val. Little or no product formation with His, Ser, Thr, Arg, Lys, or Cys. Also active on pyruvic and butyric acid analogs of IAA, PAA and the synthetic auxin naphthaleneacetic acid (NAA). The two chlorinated synthetic auxin herbicides 2,4-D and 3,6-dichloro-o-anisic acid (dicamba) cannot be used as substrates. The chain is Indole-3-acetic acid-amido synthetase GH3.5 (GH3.5) from Arabidopsis thaliana (Mouse-ear cress).